The chain runs to 108 residues: Parvalbumin beta 1 (108 aa).

Alanine 1 carries the N-acetylalanine modification. 2 EF-hand domains span residues 38–73 (KXXDDVKKXXXVLDQDASGFLEVEELKLFLQNFCPK) and 77–108 (LTDAETKAFLKAGDADGDGMLGLDEFAVLVKQ). Aspartate 51, aspartate 53, serine 55, phenylalanine 57, glutamate 59, glutamate 62, aspartate 90, aspartate 92, aspartate 94, methionine 96, and glutamate 101 together coordinate Ca(2+).

Belongs to the parvalbumin family.

In muscle, parvalbumin is thought to be involved in relaxation after contraction. It binds two calcium ions. The protein is Parvalbumin beta 1 of Oncorhynchus mykiss (Rainbow trout).